A 727-amino-acid chain; its full sequence is Fatty acid oxidation complex subunit alpha (727 aa).

Residues 16-205 form an enoyl-CoA hydratase region; sequence NQTASVFSFD…RLGLVDDAVP (190 aa). Residues 321-727 are 3-hydroxyacyl-CoA dehydrogenase; it reads AKIKHVGILG…MAEQNKSFYP (407 aa).

In the N-terminal section; belongs to the enoyl-CoA hydratase/isomerase family. It in the central section; belongs to the 3-hydroxyacyl-CoA dehydrogenase family. In terms of assembly, heterotetramer of two alpha chains (FadJ) and two beta chains (FadI).

It localises to the cytoplasm. It catalyses the reaction a (3S)-3-hydroxyacyl-CoA = a (2E)-enoyl-CoA + H2O. It carries out the reaction a 4-saturated-(3S)-3-hydroxyacyl-CoA = a (3E)-enoyl-CoA + H2O. The enzyme catalyses a (3S)-3-hydroxyacyl-CoA + NAD(+) = a 3-oxoacyl-CoA + NADH + H(+). The catalysed reaction is (3S)-3-hydroxybutanoyl-CoA = (3R)-3-hydroxybutanoyl-CoA. It functions in the pathway lipid metabolism; fatty acid beta-oxidation. In terms of biological role, catalyzes the formation of a hydroxyacyl-CoA by addition of water on enoyl-CoA. Also exhibits 3-hydroxyacyl-CoA epimerase and 3-hydroxyacyl-CoA dehydrogenase activities. This Photorhabdus laumondii subsp. laumondii (strain DSM 15139 / CIP 105565 / TT01) (Photorhabdus luminescens subsp. laumondii) protein is Fatty acid oxidation complex subunit alpha.